Here is a 99-residue protein sequence, read N- to C-terminus: Cyclin-dependent kinases regulatory subunit (99 aa).

This sequence belongs to the CKS family. In terms of assembly, forms a homohexamer that can probably bind six kinase subunits.

Functionally, binds to the catalytic subunit of the cyclin dependent kinases (Cdc2) and is essential for their biological function. This chain is Cyclin-dependent kinases regulatory subunit, found in Leishmania mexicana.